Consider the following 329-residue polypeptide: Putative glycosyltransferase CsbB (329 aa).

2 helical membrane passes run 231 to 251 and 264 to 284; these read CFYT…ATFV and FTII…LGII.

The protein belongs to the glycosyltransferase 2 family. GtrB subfamily.

The protein resides in the cell membrane. This chain is Putative glycosyltransferase CsbB (csbB), found in Bacillus subtilis (strain 168).